Here is a 94-residue protein sequence, read N- to C-terminus: Alpha-elapitoxin-Nss2a (94 aa).

Residues 1–21 (MKTLLLTLVVVTIVCLDLGDS) form the signal peptide. 5 disulfide bridges follow: Cys-24–Cys-41, Cys-34–Cys-62, Cys-47–Cys-51, Cys-66–Cys-77, and Cys-78–Cys-83.

The protein belongs to the three-finger toxin family. Long-chain subfamily. Type II alpha-neurotoxin sub-subfamily. In terms of tissue distribution, expressed by the venom gland.

It localises to the secreted. Binds with high affinity to muscular (alpha-1/CHRNA1) and neuronal (alpha-7/CHRNA7) nicotinic acetylcholine receptor (nAChR) and inhibits acetylcholine from binding to the receptor, thereby impairing neuromuscular and neuronal transmission. The sequence is that of Alpha-elapitoxin-Nss2a from Notechis scutatus scutatus (Mainland tiger snake).